The following is a 393-amino-acid chain: Acetate kinase (393 aa).

Position 7 (N7) interacts with Mg(2+). K14 lines the ATP pocket. Residue R90 coordinates substrate. D147 serves as the catalytic Proton donor/acceptor. ATP contacts are provided by residues 205–209 (HLGNG), 280–282 (DFR), and 328–332 (GIGEN). E380 is a Mg(2+) binding site.

Belongs to the acetokinase family. Homodimer. It depends on Mg(2+) as a cofactor. Requires Mn(2+) as cofactor.

It is found in the cytoplasm. It carries out the reaction acetate + ATP = acetyl phosphate + ADP. Its pathway is metabolic intermediate biosynthesis; acetyl-CoA biosynthesis; acetyl-CoA from acetate: step 1/2. In terms of biological role, catalyzes the formation of acetyl phosphate from acetate and ATP. Can also catalyze the reverse reaction. This Finegoldia magna (strain ATCC 29328 / DSM 20472 / WAL 2508) (Peptostreptococcus magnus) protein is Acetate kinase.